Consider the following 388-residue polypeptide: S-adenosylmethionine synthase (388 aa).

Histidine 16 lines the ATP pocket. Residue aspartate 18 participates in Mg(2+) binding. Position 44 (glutamate 44) interacts with K(+). L-methionine-binding residues include glutamate 57 and glutamine 100. The interval 100-110 (QSPDIAQGVNE) is flexible loop. Residues 167–169 (DGK), 233–234 (RF), aspartate 242, 248–249 (RK), and lysine 269 each bind ATP. Aspartate 242 contributes to the L-methionine binding site. Lysine 273 contacts L-methionine.

It belongs to the AdoMet synthase family. In terms of assembly, homotetramer; dimer of dimers. Mg(2+) is required as a cofactor. It depends on K(+) as a cofactor.

Its subcellular location is the cytoplasm. It carries out the reaction L-methionine + ATP + H2O = S-adenosyl-L-methionine + phosphate + diphosphate. It participates in amino-acid biosynthesis; S-adenosyl-L-methionine biosynthesis; S-adenosyl-L-methionine from L-methionine: step 1/1. In terms of biological role, catalyzes the formation of S-adenosylmethionine (AdoMet) from methionine and ATP. The overall synthetic reaction is composed of two sequential steps, AdoMet formation and the subsequent tripolyphosphate hydrolysis which occurs prior to release of AdoMet from the enzyme. The sequence is that of S-adenosylmethionine synthase from Desulfosudis oleivorans (strain DSM 6200 / JCM 39069 / Hxd3) (Desulfococcus oleovorans).